The sequence spans 294 residues: MEGANVNEDERKYLRQIKHIIDEGDKVIDRTGVGTLSLFGLHSTYSLRNGVIPLLTTKRVYWKGVVEELLWFIKGDTDAKRLSAKGVKIWDANGSREFLDSQGFKDRPEGDLGPIYGFQWRHFGAEYHGTDADYKGQGVDQLADVIEQIKNNPNSRRIILNAWNVKDLHQMALPPCHTLAQFAVKNGELSCQLYQRSGDMGLGVPFNLASYGLLTHMIAHVCALKTGFLHHVLGDAHVYLNHIDALKEQLSRDPRPFPTVHFEGRIDSIDDFTAESIILNGYNPMAPIKMPMAV.

Residues Arg-30 and 156–157 (RR) contribute to the dUMP site. The active-site Nucleophile is the Cys-176. DUMP-binding positions include 196–199 (RSGD), Asn-207, and 237–239 (HVY). Asp-199 is a (6R)-5,10-methylene-5,6,7,8-tetrahydrofolate binding site. Ala-293 is a (6R)-5,10-methylene-5,6,7,8-tetrahydrofolate binding site.

The protein belongs to the thymidylate synthase family. Homodimer.

The catalysed reaction is dUMP + (6R)-5,10-methylene-5,6,7,8-tetrahydrofolate = 7,8-dihydrofolate + dTMP. Its pathway is pyrimidine metabolism; dTTP biosynthesis. The polypeptide is Thymidylate synthase (Ascaris suum (Pig roundworm)).